Here is a 125-residue protein sequence, read N- to C-terminus: Synaptobrevin (125 aa).

The tract at residues 1–46 is disordered; the sequence is MSGPQNPQAGPGGPPSGPPQPGGPPGPPQGPPQPVQQSKRLQQTQA. Topologically, residues 1 to 103 are cytoplasmic; the sequence is MSGPQNPQAG…KRKFWWKNCK (103 aa). Over residues 12–34 the composition is skewed to pro residues; that stretch reads GGPPSGPPQPGGPPGPPQGPPQP. In terms of domain architecture, v-SNARE coiled-coil homology spans 40 to 100; it reads RLQQTQAQVE…GKLKRKFWWK (61 aa). The chain crosses the membrane as a helical; Anchor for type IV membrane protein span at residues 104-123; sequence MMIILGGIVAVIVTVIIVWA. Residues 124–125 lie on the Vesicular side of the membrane; it reads AT.

This sequence belongs to the synaptobrevin family.

The protein resides in the cytoplasmic vesicle. The protein localises to the secretory vesicle. It localises to the synaptic vesicle membrane. Its subcellular location is the synapse. It is found in the synaptosome. Intrinsic membrane protein of small synaptic vesicles. The chain is Synaptobrevin from Doryteuthis pealeii (Longfin inshore squid).